The following is a 235-amino-acid chain: Phosphoribosylformylglycinamidine synthase subunit PurQ (235 aa).

The Glutamine amidotransferase type-1 domain maps to 5-235 (FGVVVFPGSN…LLNHVSIVAA (231 aa)). Residue Cys-88 is the Nucleophile of the active site. Catalysis depends on residues His-205 and Glu-207.

Part of the FGAM synthase complex composed of 1 PurL, 1 PurQ and 2 PurS subunits.

It localises to the cytoplasm. The enzyme catalyses N(2)-formyl-N(1)-(5-phospho-beta-D-ribosyl)glycinamide + L-glutamine + ATP + H2O = 2-formamido-N(1)-(5-O-phospho-beta-D-ribosyl)acetamidine + L-glutamate + ADP + phosphate + H(+). It carries out the reaction L-glutamine + H2O = L-glutamate + NH4(+). It participates in purine metabolism; IMP biosynthesis via de novo pathway; 5-amino-1-(5-phospho-D-ribosyl)imidazole from N(2)-formyl-N(1)-(5-phospho-D-ribosyl)glycinamide: step 1/2. Functionally, part of the phosphoribosylformylglycinamidine synthase complex involved in the purines biosynthetic pathway. Catalyzes the ATP-dependent conversion of formylglycinamide ribonucleotide (FGAR) and glutamine to yield formylglycinamidine ribonucleotide (FGAM) and glutamate. The FGAM synthase complex is composed of three subunits. PurQ produces an ammonia molecule by converting glutamine to glutamate. PurL transfers the ammonia molecule to FGAR to form FGAM in an ATP-dependent manner. PurS interacts with PurQ and PurL and is thought to assist in the transfer of the ammonia molecule from PurQ to PurL. In Salinibacter ruber (strain DSM 13855 / M31), this protein is Phosphoribosylformylglycinamidine synthase subunit PurQ.